The sequence spans 585 residues: Protein FAM13C (585 aa).

3 disordered regions span residues 26 to 45, 83 to 138, and 171 to 216; these read PVSL…ENNK, SMGN…NAFK, and EAAQ…APED. Basic and acidic residues-rich tracts occupy residues 27–45 and 99–112; these read VSLH…ENNK and ESGR…ETEH. The residue at position 131 (Ser-131) is a Phosphoserine. Ser-238 is modified (phosphoserine). 3 disordered regions span residues 250-282, 349-391, and 441-477; these read FNLD…DGKE, EEQG…EETP, and IPTI…DHLT. Polar residues predominate over residues 262–275; sequence STQQFMMPRSSSRC. Phosphoserine occurs at positions 385 and 386.

This sequence belongs to the FAM13 family.

The chain is Protein FAM13C (FAM13C) from Homo sapiens (Human).